The following is a 317-amino-acid chain: MPAQGSQRSXLGSLNSTLMATPSLGLAANQSGPQCLEVSVPDGLFLCLGLVSLVENMLVVAAIAKNRNLHSPMYCFICCLALSDLLVSISNVLETAVMLLLEAGALAVGATVVQQLDNVIDVLICSSMVSSLCFLGAIAMDRYISIFYALRYHSIVTLSRAQWATAAVWAASILSSTLFIAYYDRTVVLLCLVVFFLAMLVLMAVLYAHMLTQACQHVQGITRLHKRQHLVQQGFGLKGAATLTILLGVFLLCWGPFFLHLTLIAVCPQHPTCSCVFKNFKLFLALIICNAIVDPLIYAFRSQELRKTLKEVLLFSW.

Over 1 to 37 (MPAQGSQRSXLGSLNSTLMATPSLGLAANQSGPQCLE) the chain is Extracellular. 2 N-linked (GlcNAc...) asparagine glycosylation sites follow: N15 and N29. The chain crosses the membrane as a helical span at residues 38 to 63 (VSVPDGLFLCLGLVSLVENMLVVAAI). At 64–72 (AKNRNLHSP) the chain is on the cytoplasmic side. A helical membrane pass occupies residues 73–93 (MYCFICCLALSDLLVSISNVL). Residues 94–118 (ETAVMLLLEAGALAVGATVVQQLDN) are Extracellular-facing. Residues 119-140 (VIDVLICSSMVSSLCFLGAIAM) traverse the membrane as a helical segment. Topologically, residues 141–163 (DRYISIFYALRYHSIVTLSRAQW) are cytoplasmic. The chain crosses the membrane as a helical span at residues 164-183 (ATAAVWAASILSSTLFIAYY). Residues 184–191 (DRTVVLLC) are Extracellular-facing. Residues 192–211 (LVVFFLAMLVLMAVLYAHML) traverse the membrane as a helical segment. At 212-240 (TQACQHVQGITRLHKRQHLVQQGFGLKGA) the chain is on the cytoplasmic side. The chain crosses the membrane as a helical span at residues 241–266 (ATLTILLGVFLLCWGPFFLHLTLIAV). Residues 267–279 (CPQHPTCSCVFKN) are Extracellular-facing. Residues 280-300 (FKLFLALIICNAIVDPLIYAF) traverse the membrane as a helical segment. At 301 to 317 (RSQELRKTLKEVLLFSW) the chain is on the cytoplasmic side.

This sequence belongs to the G-protein coupled receptor 1 family. Interacts with MGRN1, but does not undergo MGRN1-mediated ubiquitination; this interaction competes with GNAS-binding and thus inhibits agonist-induced cAMP production. Interacts with OPN3; the interaction results in a decrease in MC1R-mediated cAMP signaling and ultimately a decrease in melanin production in melanocytes.

The protein localises to the cell membrane. Receptor for MSH (alpha, beta and gamma) and ACTH. The activity of this receptor is mediated by G proteins which activate adenylate cyclase. Mediates melanogenesis, the production of eumelanin (black/brown) and phaeomelanin (red/yellow), via regulation of cAMP signaling in melanocytes. The protein is Melanocyte-stimulating hormone receptor (MC1R) of Galago senegalensis (Northern lesser bushbaby).